The sequence spans 829 residues: RNA-directed RNA polymerase (829 aa).

Residues 1–39 (MKEPVDCRLSTPAGFSGTVPPPGRTKAARPGTIPVRRSR) are disordered.

Forms a ribonucleoprotein complex with the 20S RNA, where a single polymerase molecule binds to a single viral RNA genome. Since the viral RNA is not encapsidated, ribonucleoprotein complex formation appears to be the strategy to survive in the host as persistent virus.

The protein resides in the host cytoplasm. It catalyses the reaction RNA(n) + a ribonucleoside 5'-triphosphate = RNA(n+1) + diphosphate. RNA-directed RNA polymerase that replicates the viral (+) and (-) genome. The sequence is that of RNA-directed RNA polymerase from Saccharomyces cerevisiae (Baker's yeast).